Reading from the N-terminus, the 102-residue chain is NADH-quinone oxidoreductase subunit K (102 aa).

Transmembrane regions (helical) follow at residues isoleucine 5–leucine 25, isoleucine 31–phenylalanine 51, and phenylalanine 66–phenylalanine 86.

Belongs to the complex I subunit 4L family. NDH-1 is composed of 14 different subunits. Subunits NuoA, H, J, K, L, M, N constitute the membrane sector of the complex.

The protein localises to the cell inner membrane. The catalysed reaction is a quinone + NADH + 5 H(+)(in) = a quinol + NAD(+) + 4 H(+)(out). In terms of biological role, NDH-1 shuttles electrons from NADH, via FMN and iron-sulfur (Fe-S) centers, to quinones in the respiratory chain. The immediate electron acceptor for the enzyme in this species is believed to be ubiquinone. Couples the redox reaction to proton translocation (for every two electrons transferred, four hydrogen ions are translocated across the cytoplasmic membrane), and thus conserves the redox energy in a proton gradient. The chain is NADH-quinone oxidoreductase subunit K from Bartonella bacilliformis (strain ATCC 35685 / KC583 / Herrer 020/F12,63).